Reading from the N-terminus, the 838-residue chain is Rho GTPase-activating protein 12 (838 aa).

An SH3 domain is found at 10–72; the sequence is AGQAYIEVEY…PAQYVKEVTR (63 aa). Polar residues-rich tracts occupy residues 155–172 and 189–198; these read GKFN…QNRT and TSFSQEQSCD. Residues 155-239 are disordered; it reads GKFNSDSHSP…PPNQGRPDSP (85 aa). Ser-163 bears the Phosphoserine mark. 3 positions are modified to phosphoserine: Ser-199, Ser-211, and Ser-213. Residues Thr-228 and Thr-229 each carry the phosphothreonine modification. At Ser-238 the chain carries Phosphoserine. Tyr-241 bears the Phosphotyrosine mark. The region spanning 263–296 is the WW 1 domain; it reads IQVNGEWETHKDSSGRCYYYNRTTQERTWKPPRW. The segment covering 291–302 has biased composition (basic and acidic residues); the sequence is WKPPRWARDVST. The segment at 291 to 346 is disordered; it reads WKPPRWARDVSTSRDFQSPGEQEPLSSEENYHSSCFSQSDSQCGSPPRGWSEELDE. The segment covering 303-334 has biased composition (polar residues); it reads SRDFQSPGEQEPLSSEENYHSSCFSQSDSQCG. A WW 2 domain is found at 355–388; it reads DYTKEKWLKHVDDQGRQYYYSADGSRSEWELPKY. Residues 425 to 456 form a disordered region; that stretch reads DSNDKDSPTTTKLCLPENESPPTSSKHQDPGQ. The region spanning 466–567 is the PH domain; sequence KITENGKKVR…WFKVLSSTIN (102 aa). The segment covering 572-582 has biased composition (acidic residues); the sequence is EADEAAEEETP. The interval 572–620 is disordered; sequence EADEAAEEETPDSPGVEKHDKEKDQKELKKLRSMKGSSMDSSEQKKTKK. A Phosphoserine modification is found at Ser-584. The segment covering 586–601 has biased composition (basic and acidic residues); the sequence is GVEKHDKEKDQKELKK. One can recognise a Rho-GAP domain in the interval 648 to 836; sequence SNLANLCQRE…LILLELSTVF (189 aa).

GTPase activator for the Rho-type GTPases by converting them to an inactive GDP-bound state. The chain is Rho GTPase-activating protein 12 (Arhgap12) from Mus musculus (Mouse).